Here is a 233-residue protein sequence, read N- to C-terminus: Phosphoribosylaminoimidazole-succinocarboxamide synthase (233 aa).

This sequence belongs to the SAICAR synthetase family.

It catalyses the reaction 5-amino-1-(5-phospho-D-ribosyl)imidazole-4-carboxylate + L-aspartate + ATP = (2S)-2-[5-amino-1-(5-phospho-beta-D-ribosyl)imidazole-4-carboxamido]succinate + ADP + phosphate + 2 H(+). The protein operates within purine metabolism; IMP biosynthesis via de novo pathway; 5-amino-1-(5-phospho-D-ribosyl)imidazole-4-carboxamide from 5-amino-1-(5-phospho-D-ribosyl)imidazole-4-carboxylate: step 1/2. This chain is Phosphoribosylaminoimidazole-succinocarboxamide synthase, found in Staphylococcus saprophyticus subsp. saprophyticus (strain ATCC 15305 / DSM 20229 / NCIMB 8711 / NCTC 7292 / S-41).